The primary structure comprises 250 residues: MYKLVLIRHGESQWNLENRFTGWTDVDLTETGREQARKAGELLKREGYAFDLAYTSVLKRAIRTLWIALDALDAMYTPVGINWRLNERHYGQLQGLNKAETAAKYGDEQVLIWRRAYAIAPEPLDLEDPRHPRFDGRYAKIPADQLPATECLKDTVARVLPFWNESIAPAIRAGRRVLVAAHGNSLRALIKHLDNVSDDDIVGVNIPTGQPLVYELDEDLKPIRHYYLGDAAEIEAAMAAVAAQGKAKKD.

Residues 8–15 (RHGESQWN), 21–22 (TG), Arg60, 87–90 (ERHY), Lys98, 114–115 (RR), and 183–184 (GN) contribute to the substrate site. The active-site Tele-phosphohistidine intermediate is His9. Catalysis depends on Glu87, which acts as the Proton donor/acceptor.

It belongs to the phosphoglycerate mutase family. BPG-dependent PGAM subfamily. As to quaternary structure, homodimer.

The catalysed reaction is (2R)-2-phosphoglycerate = (2R)-3-phosphoglycerate. It functions in the pathway carbohydrate degradation; glycolysis; pyruvate from D-glyceraldehyde 3-phosphate: step 3/5. Functionally, catalyzes the interconversion of 2-phosphoglycerate and 3-phosphoglycerate. The chain is 2,3-bisphosphoglycerate-dependent phosphoglycerate mutase from Bordetella parapertussis (strain 12822 / ATCC BAA-587 / NCTC 13253).